The following is a 196-amino-acid chain: Corrinoid adenosyltransferase CobA (196 aa).

36–42 (GNGKGKT) contacts ATP.

The protein belongs to the Cob(I)alamin adenosyltransferase family. As to quaternary structure, homodimer.

The protein resides in the cytoplasm. The catalysed reaction is 2 cob(II)yrinate a,c diamide + reduced [electron-transfer flavoprotein] + 2 ATP = 2 adenosylcob(III)yrinate a,c-diamide + 2 triphosphate + oxidized [electron-transfer flavoprotein] + 3 H(+). The enzyme catalyses 2 cob(II)alamin + reduced [electron-transfer flavoprotein] + 2 ATP = 2 adenosylcob(III)alamin + 2 triphosphate + oxidized [electron-transfer flavoprotein] + 3 H(+). Its pathway is cofactor biosynthesis; adenosylcobalamin biosynthesis; adenosylcobalamin from cob(II)yrinate a,c-diamide: step 2/7. Its function is as follows. Required for both de novo synthesis of the corrin ring for the assimilation of exogenous corrinoids. Participates in the adenosylation of a variety of incomplete and complete corrinoids. This Salmonella typhimurium (strain LT2 / SGSC1412 / ATCC 700720) protein is Corrinoid adenosyltransferase CobA (btuR).